Reading from the N-terminus, the 93-residue chain is Serine rich endogenous peptide 6 (93 aa).

The signal sequence occupies residues Met1 to Ser27. 2 consecutive short sequence motifs (SCOOP motif) follow at residues Gly48 to Ile62 and Ile73 to Arg87. Residues Gly52 to Gly93 are disordered. The span at Ser53–Tyr66 shows a compositional bias: polar residues. 2 consecutive short sequence motifs (sxS motif essential for MIK2 binding) follow at residues Ser54–Ser56 and Ser79–Ser81.

The protein belongs to the serine rich endogenous peptide (SCOOP) phytocytokine family. As to quaternary structure, interacts with MIK2 (via extracellular leucine-rich repeat domain); this interaction triggers the formation of complex between MIK2 and the BAK1/SERK3 and SERK4 coreceptors, and subsequent BAK1 activation by phosphorylation. In terms of tissue distribution, mostly expressed in seedlings shoots, and, to a lower extent, in roots.

It is found in the cell membrane. The protein resides in the secreted. Its subcellular location is the extracellular space. The protein localises to the apoplast. Brassicaceae-specific phytocytokine (plant endogenous peptide released into the apoplast) perceived by MIK2 in a BAK1/SERK3 and SERK4 coreceptors-dependent manner, that modulates various physiological and antimicrobial processes including growth prevention and reactive oxygen species (ROS) response regulation. Inhibits root growth. The protein is Serine rich endogenous peptide 6 of Arabidopsis thaliana (Mouse-ear cress).